A 361-amino-acid polypeptide reads, in one-letter code: Divinyl chlorophyll a/b light-harvesting protein PcbD (361 aa).

The next 6 membrane-spanning stretches (helical) occupy residues 27-47 (FIASHVGHTGLICFAAGGSTL), 93-113 (IVHLILSMVYGGGGLLHGILF), 140-160 (FILGHHLIFMGVACAWFVEWA), 201-221 (VMGGHAFLAFAEITGGAFHIV), 248-268 (AVLSWSLAGIGWMAIVAAFWC), and 315-335 (LTNVHYYLGFFFLQGHFWHAL).

It belongs to the PsbB/PsbC family. IsiA/Pcb subfamily. The antenna complex consists of divinyl chlorophylls (a and b) and divinyl chlorophyll a/b binding proteins and binds more divinyl chlorophyll b than does the antenna complex from high-light-adapted Prochlorococcus. The cofactor is divinyl chlorophyll a. It depends on divinyl chlorophyll b as a cofactor.

The protein localises to the cellular thylakoid membrane. In terms of biological role, the antenna complex functions as a light receptor, it captures and delivers excitation energy to photosystems II and I. The Prochlorales pcb genes are not related to higher plant LHCs. The polypeptide is Divinyl chlorophyll a/b light-harvesting protein PcbD (pcbD) (Prochlorococcus marinus (strain SARG / CCMP1375 / SS120)).